Reading from the N-terminus, the 396-residue chain is Dual specificity mitogen-activated protein kinase kinase dSOR1 (396 aa).

Residues 25–44 (APTPPFKTPSGTDTHSLLGK) are disordered. One can recognise a Protein kinase domain in the interval 87-364 (LEKLGELGSG…LKTLLSHPWI (278 aa)). ATP is bound by residues 93 to 101 (LGSGNGGVV) and Lys116. Catalysis depends on Asp209, which acts as the Proton acceptor. Ser237 and Ser241 each carry phosphoserine; by RAF.

Belongs to the protein kinase superfamily. STE Ser/Thr protein kinase family. MAP kinase kinase subfamily. In terms of assembly, interacts with Raf and ksr; Dsor1 binding to ksr probably promotes ksr and Raf dimerization and ksr-mediated Raf transactivation. Post-translationally, phosphorylation on Ser/Thr by MAP kinase kinase kinases regulates positively the kinase activity.

The enzyme catalyses L-seryl-[protein] + ATP = O-phospho-L-seryl-[protein] + ADP + H(+). It catalyses the reaction L-threonyl-[protein] + ATP = O-phospho-L-threonyl-[protein] + ADP + H(+). It carries out the reaction L-tyrosyl-[protein] + ATP = O-phospho-L-tyrosyl-[protein] + ADP + H(+). Required downstream of Raf in the sevenless (sev), torso (tor), and Drosophila EGF receptor homolog (DER) signal transduction pathways. Involved in both positive regulation (at the posterior terminus) and negative regulation (at the anterior domain) of tll, as in other terminal class gene products, maybe via the ERK-A kinase. The polypeptide is Dual specificity mitogen-activated protein kinase kinase dSOR1 (Dsor1) (Drosophila melanogaster (Fruit fly)).